We begin with the raw amino-acid sequence, 522 residues long: GMP synthase [glutamine-hydrolyzing] (522 aa).

The Glutamine amidotransferase type-1 domain maps to 8–204 (RLLIIDFGSQ…FVRLAGFKGD (197 aa)). Cys86 functions as the Nucleophile in the catalytic mechanism. Residues His179 and Glu181 contribute to the active site. The 193-residue stretch at 205–397 (WTMGAYREEA…LGLPASFIGR (193 aa)) folds into the GMPS ATP-PPase domain. Position 232-238 (232-238 (SGGVDSS)) interacts with ATP.

In terms of assembly, homodimer.

The catalysed reaction is XMP + L-glutamine + ATP + H2O = GMP + L-glutamate + AMP + diphosphate + 2 H(+). It participates in purine metabolism; GMP biosynthesis; GMP from XMP (L-Gln route): step 1/1. Catalyzes the synthesis of GMP from XMP. The protein is GMP synthase [glutamine-hydrolyzing] of Roseobacter denitrificans (strain ATCC 33942 / OCh 114) (Erythrobacter sp. (strain OCh 114)).